The sequence spans 139 residues: ATP synthase epsilon chain (139 aa).

Residues 89–110 (EARAEQARAEAEARRREAQSEH) are disordered.

It belongs to the ATPase epsilon chain family. As to quaternary structure, F-type ATPases have 2 components, CF(1) - the catalytic core - and CF(0) - the membrane proton channel. CF(1) has five subunits: alpha(3), beta(3), gamma(1), delta(1), epsilon(1). CF(0) has three main subunits: a, b and c.

Its subcellular location is the cell membrane. Produces ATP from ADP in the presence of a proton gradient across the membrane. The sequence is that of ATP synthase epsilon chain from Chloroflexus aggregans (strain MD-66 / DSM 9485).